We begin with the raw amino-acid sequence, 476 residues long: Lactate utilization protein B (476 aa).

4Fe-4S ferredoxin-type domains lie at Gly-304 to Tyr-334 and Tyr-353 to Leu-382. Cys-313, Cys-316, Cys-319, Cys-323, Cys-366, Cys-369, and Cys-373 together coordinate [4Fe-4S] cluster. Positions Arg-452 to Ser-476 are disordered.

This sequence belongs to the LutB/YkgF family.

Is involved in L-lactate degradation and allows cells to grow with lactate as the sole carbon source. Has probably a role as an electron transporter during oxidation of L-lactate. This Lysinibacillus sphaericus (strain C3-41) protein is Lactate utilization protein B.